The chain runs to 370 residues: Thiamine-repressible mitochondrial transport protein THI74 (370 aa).

Residues 1–10 (MNRVGIDVDH) lie on the Cytoplasmic side of the membrane. The helical transmembrane segment at 11 to 31 (MIGVLLLAVVVVFWVGASCLT) threads the bilayer. The Mitochondrial intermembrane portion of the chain corresponds to 32–42 (NELLETNAYNK). Residues 43–63 (PFFLTYLNISSFALYLTPDLW) form a helical membrane-spanning segment. Topologically, residues 64-119 (RIIQSRRKSLQERTERTLPIHTQESFSEFLPLLSSTPSTSSNLSSIADTKVKDTMR) are cytoplasmic. A helical transmembrane segment spans residues 120-140 (LSLLFCVLWFVANLAANAALS). An EamA domain is found at 129-190 (FVANLAANAA…SLFGIILIVM (62 aa)). The Mitochondrial intermembrane segment spans residues 141–146 (YTTVAS). Residues 147–167 (STILSSTSSFFTLFLATSLGI) form a helical membrane-spanning segment. Residues 168 to 169 (ET) lie on the Cytoplasmic side of the membrane. Residues 170–190 (FSTKKLLGLFVSLFGIILIVM) form a helical membrane-spanning segment. At 191–203 (QSSKQQDSVSASS) the chain is on the mitochondrial intermembrane side. A helical transmembrane segment spans residues 204–224 (FLVGNTLALLGSLGYSVYTTL). Residues 225 to 239 (LKYEISSKGLRLDIQ) lie on the Cytoplasmic side of the membrane. The helical transmembrane segment at 240 to 260 (MFLGYVGIFTFLLFWPILIIL) threads the bilayer. At 261–273 (DITHMETFELPSN) the chain is on the mitochondrial intermembrane side. Residues 274–294 (FHISFLVMLNCIIIFVSDYFW) traverse the membrane as a helical segment. Residues 295 to 303 (CKALILTSP) lie on the Cytoplasmic side of the membrane. A helical transmembrane segment spans residues 304–324 (LVVTVALTFTIPLAMFADFVW). The Mitochondrial intermembrane portion of the chain corresponds to 325–326 (RE). Residues 327–347 (AFFTPWYIIGVIFIFVSFFLV) traverse the membrane as a helical segment. Over 348 to 370 (NHRGESAVEKDCAAVEKGPILDA) the chain is Cytoplasmic.

Its subcellular location is the mitochondrion membrane. Functionally, may be involved in thiaminediphosphate transport across the mitochondrial membrane. In Saccharomyces cerevisiae (strain ATCC 204508 / S288c) (Baker's yeast), this protein is Thiamine-repressible mitochondrial transport protein THI74 (THI74).